Here is a 227-residue protein sequence, read N- to C-terminus: UPF0758 protein lpp2553 (227 aa).

Positions 102-225 (RLSNTQQTYA…YSIFAENKWV (124 aa)) constitute an MPN domain. 3 residues coordinate Zn(2+): H173, H175, and D186. Residues 173–186 (HNHPSGLSDASQQD) carry the JAMM motif motif.

This sequence belongs to the UPF0758 family.

This Legionella pneumophila (strain Paris) protein is UPF0758 protein lpp2553.